Reading from the N-terminus, the 290-residue chain is Poly-beta-1,6-N-acetyl-D-glucosamine N-deacetylase (290 aa).

An N-terminal signal peptide occupies residues 1 to 28; the sequence is MKYRKLIILVLSILIILPVSTLDGHHIA. The NodB homology domain occupies 114–290; sequence RSVWINFDDM…KRWDGFHEKD (177 aa).

It belongs to the polysaccharide deacetylase family.

The protein resides in the secreted. It localises to the cell wall. Functionally, catalyzes the N-deacetylation of poly-beta-1,6-N-acetyl-D-glucosamine (PNAG, also referred to as PIA), a biofilm adhesin polysaccharide. N-deacetylation is crucial for attachment of the polysaccharide to the bacterial cell surface; it leads to the introduction of positive charges in the otherwise neutral PIA polymer, allowing electrostatic interactions. The chain is Poly-beta-1,6-N-acetyl-D-glucosamine N-deacetylase (icaB) from Staphylococcus aureus (strain MRSA252).